Here is an 88-residue protein sequence, read N- to C-terminus: Small ribosomal subunit protein bS16 (88 aa).

The protein belongs to the bacterial ribosomal protein bS16 family.

This chain is Small ribosomal subunit protein bS16, found in Anaeromyxobacter dehalogenans (strain 2CP-1 / ATCC BAA-258).